Consider the following 270-residue polypeptide: uncharacterized protein (270 aa).

Its subcellular location is the cytoplasm. This is an uncharacterized protein from Schizosaccharomyces pombe (strain 972 / ATCC 24843) (Fission yeast).